A 105-amino-acid polypeptide reads, in one-letter code: Thioredoxin (105 aa).

Residues 2–103 (VKQIESKSAF…KEKLEATIKG (102 aa)) enclose the Thioredoxin domain. K3 carries the N6-acetyllysine modification. K8 carries the N6-succinyllysine modification. Residues C32 and C35 each act as nucleophile in the active site. C32 and C35 form a disulfide bridge. An N6-acetyllysine modification is found at K39. Residues C62 and C69 each carry the S-nitrosocysteine modification. C73 bears the S-nitrosocysteine; alternate mark. Position 94 is an N6-acetyllysine; alternate (K94). The residue at position 94 (K94) is an N6-succinyllysine; alternate.

The protein belongs to the thioredoxin family. Homodimer; disulfide-linked. Interacts with TXNIP through the redox-active site. Interacts with MAP3K5 and CASP3. Interacts with APEX1; the interaction stimulates the FOS/JUN AP-1 DNA-binding activity in a redox-dependent manner. In terms of processing, in the fully reduced protein, both Cys-69 and Cys-73 are nitrosylated in response to nitric oxide (NO). When two disulfide bonds are present in the protein, only Cys-73 is nitrosylated. Cys-73 can serve as donor for nitrosylation of target proteins.

The protein resides in the nucleus. It is found in the cytoplasm. The protein localises to the secreted. Its function is as follows. Participates in various redox reactions through the reversible oxidation of its active center dithiol to a disulfide and catalyzes dithiol-disulfide exchange reactions. Plays a role in the reversible S-nitrosylation of cysteine residues in target proteins, and thereby contributes to the response to intracellular nitric oxide. Nitrosylates the active site Cys of CASP3 in response to nitric oxide (NO), and thereby inhibits caspase-3 activity. Induces the FOS/JUN AP-1 DNA binding activity in ionizing radiation (IR) cells through its oxidation/reduction status and stimulates AP-1 transcriptional activity. This is Thioredoxin (TXN) from Equus caballus (Horse).